The chain runs to 128 residues: Histone H2A.2 (128 aa).

This sequence belongs to the histone H2A family. The nucleosome is a histone octamer containing two molecules each of H2A, H2B, H3 and H4 assembled in one H3-H4 heterotetramer and two H2A-H2B heterodimers. The octamer wraps approximately 147 bp of DNA. As to expression, expressed in the generative cell within the bicellular pollen. Not detected in other reproductive or vegetative tissues.

The protein resides in the nucleus. It is found in the chromosome. Core component of nucleosome. Nucleosomes wrap and compact DNA into chromatin, limiting DNA accessibility to the cellular machineries which require DNA as a template. Histones thereby play a central role in transcription regulation, DNA repair, DNA replication and chromosomal stability. DNA accessibility is regulated via a complex set of post-translational modifications of histones, also called histone code, and nucleosome remodeling. May be involved in the repression of gene expression in male gametes. This is Histone H2A.2 (gH2A) from Lilium longiflorum (Trumpet lily).